We begin with the raw amino-acid sequence, 234 residues long: Proteasome subunit alpha type-2 (234 aa).

N-acetylalanine is present on alanine 2. Tyrosine 121 carries the phosphotyrosine modification.

It belongs to the peptidase T1A family. In terms of assembly, the 26S proteasome consists of a 20S proteasome core and two 19S regulatory subunits. The 20S proteasome core is composed of 28 subunits that are arranged in four stacked rings, resulting in a barrel-shaped structure. The two end rings are each formed by seven alpha subunits, and the two central rings are each formed by seven beta subunits. The catalytic chamber with the active sites is on the inside of the barrel.

It localises to the cytoplasm. The protein localises to the nucleus. Its function is as follows. The proteasome is a multicatalytic proteinase complex which is characterized by its ability to cleave peptides with Arg, Phe, Tyr, Leu, and Glu adjacent to the leaving group at neutral or slightly basic pH. The proteasome has an ATP-dependent proteolytic activity. PSMA2 may have a potential regulatory effect on another component(s) of the proteasome complex through tyrosine phosphorylation. The polypeptide is Proteasome subunit alpha type-2 (psma2) (Carassius auratus (Goldfish)).